Consider the following 458-residue polypeptide: uncharacterized protein (458 aa).

Disordered stretches follow at residues 339–397 (GTGY…ARIL) and 434–458 (YNSE…EDDC). 2 stretches are compositionally biased toward acidic residues: residues 344–390 (SDSD…EEEP) and 436–458 (SEDE…EDDC).

This is an uncharacterized protein from Invertebrate iridescent virus 3 (IIV-3).